A 347-amino-acid chain; its full sequence is UDP-3-O-acylglucosamine N-acyltransferase (347 aa).

The active-site Proton acceptor is the His241.

Belongs to the transferase hexapeptide repeat family. LpxD subfamily. As to quaternary structure, homotrimer.

The catalysed reaction is a UDP-3-O-[(3R)-3-hydroxyacyl]-alpha-D-glucosamine + a (3R)-hydroxyacyl-[ACP] = a UDP-2-N,3-O-bis[(3R)-3-hydroxyacyl]-alpha-D-glucosamine + holo-[ACP] + H(+). It functions in the pathway bacterial outer membrane biogenesis; LPS lipid A biosynthesis. In terms of biological role, catalyzes the N-acylation of UDP-3-O-acylglucosamine using 3-hydroxyacyl-ACP as the acyl donor. Is involved in the biosynthesis of lipid A, a phosphorylated glycolipid that anchors the lipopolysaccharide to the outer membrane of the cell. The chain is UDP-3-O-acylglucosamine N-acyltransferase from Neisseria gonorrhoeae (strain ATCC 700825 / FA 1090).